The primary structure comprises 149 residues: Probable glycine cleavage system H protein 2 (149 aa).

The region spanning 32–114 (IAVVGITDLA…YGQGWIAKIK (83 aa)) is the Lipoyl-binding domain. An N6-lipoyllysine modification is found at lysine 73.

This sequence belongs to the GcvH family. As to quaternary structure, the glycine cleavage system is composed of four proteins: P, T, L and H. (R)-lipoate is required as a cofactor.

The glycine cleavage system catalyzes the degradation of glycine. The H protein shuttles the methylamine group of glycine from the P protein to the T protein. In Sulfolobus acidocaldarius (strain ATCC 33909 / DSM 639 / JCM 8929 / NBRC 15157 / NCIMB 11770), this protein is Probable glycine cleavage system H protein 2.